The sequence spans 203 residues: Holliday junction branch migration complex subunit RuvA (203 aa).

The interval Met-1–Leu-63 is domain I. The tract at residues Asn-64–Lys-142 is domain II. The tract at residues Glu-143–His-149 is flexible linker. Positions Ile-150–Phe-203 are domain III.

This sequence belongs to the RuvA family. In terms of assembly, homotetramer. Forms an RuvA(8)-RuvB(12)-Holliday junction (HJ) complex. HJ DNA is sandwiched between 2 RuvA tetramers; dsDNA enters through RuvA and exits via RuvB. An RuvB hexamer assembles on each DNA strand where it exits the tetramer. Each RuvB hexamer is contacted by two RuvA subunits (via domain III) on 2 adjacent RuvB subunits; this complex drives branch migration. In the full resolvosome a probable DNA-RuvA(4)-RuvB(12)-RuvC(2) complex forms which resolves the HJ.

Its subcellular location is the cytoplasm. The RuvA-RuvB-RuvC complex processes Holliday junction (HJ) DNA during genetic recombination and DNA repair, while the RuvA-RuvB complex plays an important role in the rescue of blocked DNA replication forks via replication fork reversal (RFR). RuvA specifically binds to HJ cruciform DNA, conferring on it an open structure. The RuvB hexamer acts as an ATP-dependent pump, pulling dsDNA into and through the RuvAB complex. HJ branch migration allows RuvC to scan DNA until it finds its consensus sequence, where it cleaves and resolves the cruciform DNA. In Rickettsia africae (strain ESF-5), this protein is Holliday junction branch migration complex subunit RuvA.